The sequence spans 413 residues: E3 ubiquitin ligase ICP22 (413 aa).

The interval 1 to 124 (MADIPPDPPA…PPRKSKRPRI (124 aa)) is disordered. A compositionally biased stretch (basic and acidic residues) spans 62 to 76 (GDLRGGRRRSPRELG). Over residues 84 to 97 (SAESTTGTESEGTG) the composition is skewed to low complexity. Phosphotyrosine; by host is present on tyrosine 189. Disordered stretches follow at residues 289–334 (LETN…SASG) and 370–390 (AERS…PERE). The segment covering 297 to 309 (SDDEISDATDSDD) has biased composition (acidic residues).

This sequence belongs to the herpesviridae ICP22 family. Tyrosine phosphorylated.

The protein resides in the host nucleus. The protein operates within protein modification; protein ubiquitination. Functionally, functions as an E3 ubiquitin ligase and plays a role in the inhibition of innate immunity by preventing IFN-mediated signaling. Induces the ubiquitination and degradation of host STAT1, STAT2 and IRF9, resulting in the blockade of ISGF3 nuclear translocation. This Human herpesvirus 2 (strain HG52) (HHV-2) protein is E3 ubiquitin ligase ICP22.